Consider the following 254-residue polypeptide: DNA repair protein RecO (254 aa).

The protein belongs to the RecO family.

Functionally, involved in DNA repair and RecF pathway recombination. The sequence is that of DNA repair protein RecO from Anaeromyxobacter sp. (strain K).